An 85-amino-acid chain; its full sequence is uncharacterized protein (85 aa).

Disordered stretches follow at residues 1-22 (MFAP…TSGF) and 41-85 (EKER…SFLR). The span at 75–85 (FPSNYRGSFLR) shows a compositional bias: polar residues.

This is an uncharacterized protein from Dryophytes versicolor (chameleon treefrog).